A 337-amino-acid chain; its full sequence is tRNA N6-adenosine threonylcarbamoyltransferase (337 aa).

Fe cation-binding residues include His111 and His115. Substrate contacts are provided by residues 134–138 (LVSGG), Asp167, Gly180, and Asn272. Position 300 (Asp300) interacts with Fe cation.

The protein belongs to the KAE1 / TsaD family. Fe(2+) is required as a cofactor.

The protein resides in the cytoplasm. The catalysed reaction is L-threonylcarbamoyladenylate + adenosine(37) in tRNA = N(6)-L-threonylcarbamoyladenosine(37) in tRNA + AMP + H(+). In terms of biological role, required for the formation of a threonylcarbamoyl group on adenosine at position 37 (t(6)A37) in tRNAs that read codons beginning with adenine. Is involved in the transfer of the threonylcarbamoyl moiety of threonylcarbamoyl-AMP (TC-AMP) to the N6 group of A37, together with TsaE and TsaB. TsaD likely plays a direct catalytic role in this reaction. The sequence is that of tRNA N6-adenosine threonylcarbamoyltransferase from Yersinia pseudotuberculosis serotype I (strain IP32953).